The primary structure comprises 944 residues: Isoleucine--tRNA ligase (944 aa).

The short motif at 58-68 is the 'HIGH' region element; it reads PYANGSIHIGH. Position 563 (E563) interacts with L-isoleucyl-5'-AMP. The short motif at 604–608 is the 'KMSKS' region element; it reads KMSKS. Residue K607 participates in ATP binding. Positions 907, 910, 927, and 930 each coordinate Zn(2+).

The protein belongs to the class-I aminoacyl-tRNA synthetase family. IleS type 1 subfamily. As to quaternary structure, monomer. Zn(2+) serves as cofactor.

The protein resides in the cytoplasm. The catalysed reaction is tRNA(Ile) + L-isoleucine + ATP = L-isoleucyl-tRNA(Ile) + AMP + diphosphate. Catalyzes the attachment of isoleucine to tRNA(Ile). As IleRS can inadvertently accommodate and process structurally similar amino acids such as valine, to avoid such errors it has two additional distinct tRNA(Ile)-dependent editing activities. One activity is designated as 'pretransfer' editing and involves the hydrolysis of activated Val-AMP. The other activity is designated 'posttransfer' editing and involves deacylation of mischarged Val-tRNA(Ile). This chain is Isoleucine--tRNA ligase, found in Salmonella typhimurium (strain LT2 / SGSC1412 / ATCC 700720).